Reading from the N-terminus, the 169-residue chain is S-ribosylhomocysteine lyase (169 aa).

Histidine 54, histidine 58, and cysteine 129 together coordinate Fe cation.

It belongs to the LuxS family. In terms of assembly, homodimer. The cofactor is Fe cation.

The catalysed reaction is S-(5-deoxy-D-ribos-5-yl)-L-homocysteine = (S)-4,5-dihydroxypentane-2,3-dione + L-homocysteine. Its function is as follows. Involved in the synthesis of autoinducer 2 (AI-2) which is secreted by bacteria and is used to communicate both the cell density and the metabolic potential of the environment. The regulation of gene expression in response to changes in cell density is called quorum sensing. Catalyzes the transformation of S-ribosylhomocysteine (RHC) to homocysteine (HC) and 4,5-dihydroxy-2,3-pentadione (DPD). This is S-ribosylhomocysteine lyase from Glaesserella parasuis serovar 5 (strain SH0165) (Haemophilus parasuis).